A 72-amino-acid chain; its full sequence is Omega-conotoxin-like S6.6 (72 aa).

An N-terminal signal peptide occupies residues 1-22 (MKLTCVVIVAVLLLTACQLLTA). The propeptide occupies 23-45 (DDSRGTQKHRALRSDTKLSMSTR). Disulfide bonds link C46–C61, C53–C65, and C60–C71. At C71 the chain carries Cysteine amide.

This sequence belongs to the conotoxin O1 superfamily. Expressed by the venom duct.

Its subcellular location is the secreted. Its function is as follows. Omega-conotoxins act at presynaptic membranes, they bind and block voltage-gated calcium channels (Cav). This toxin blocks N-, P- and Q-type calcium channels. This is Omega-conotoxin-like S6.6 from Conus striatus (Striated cone).